Reading from the N-terminus, the 421-residue chain is MGEKKPEPLDFVKDFQEYLTQQTHHVNMISGSVSGDKEAETLQGAGTEGDQNGLDHPSVEVSLDENSGMLVDGFERTFDGKLKCRYCNYASKGTARLIEHIRIHTGEKPHRCHLCPFASAYERHLEAHMRSHTGEKPYKCELCSFRCSDRSNLSHHRRRKHKMVPIKGTRSSLSSKKMWGVLQKKTSNLGYSRRALINLSPPSMVVHKPDYLNDFTHEIPNIQTEAYESMTKSSQTSGLPRDPQDLMVDNPLNQLSTLAGQLSSLPPENQNERGCSPDVVTCQDEKPFMMQQPATPAVVSSVSASIAQSSSPTSPDPRPAHNQRNYSPVAGPSSDRSAHTSTPSISNSQPSTPAPTLPVQDPQLLHHCQHCDMYFADNILYTIHMGCHGFENPFQCNICGCKCKNKYDFACHFARGQHSQH.

Residues 35 to 55 form a disordered region; it reads GDKEAETLQGAGTEGDQNGLD. C2H2-type zinc fingers lie at residues 82-104, 110-132, and 138-161; these read LKCR…IRIH, HRCH…MRSH, and YKCE…RRKH. Over residues 229 to 238 the composition is skewed to polar residues; sequence SMTKSSQTSG. Disordered stretches follow at residues 229-249 and 292-358; these read SMTK…LMVD and QPAT…PTLP. Over residues 292–313 the composition is skewed to low complexity; sequence QPATPAVVSSVSASIAQSSSPT. Positions 339–351 are enriched in polar residues; that stretch reads HTSTPSISNSQPS. 2 C2H2-type zinc fingers span residues 366–388 and 394–418; these read HHCQ…MGCH and FQCN…RGQH.

This sequence belongs to the Ikaros C2H2-type zinc-finger protein family. In terms of assembly, probably self-associates.

It localises to the nucleus. Its function is as follows. Transcriptional repressor that binds the core 5'GNNTGTNG-3' DNA consensus sequence. The chain is Zinc finger protein Pegasus (IKZF5) from Gallus gallus (Chicken).